Reading from the N-terminus, the 45-residue chain is Rubredoxin-1 (45 aa).

N-formylmethionine is present on M1. The Rubredoxin-like domain occupies 1 to 45 (MQKYVCNVCGYEYDPAEHDNVPFDQLPDDWCCPVCGVSKDQFSPA). Fe cation contacts are provided by C6, C9, C32, and C35.

This sequence belongs to the rubredoxin family. Requires Fe(3+) as cofactor.

The protein resides in the cytoplasm. Its function is as follows. Rubredoxin is a small nonheme, iron protein lacking acid-labile sulfide. Its single Fe, chelated to 4 Cys, functions as an electron acceptor and may also stabilize the conformation of the molecule. Electron acceptor for cytoplasmic lactate dehydrogenase. The chain is Rubredoxin-1 (rd1) from Desulfovibrio desulfuricans (strain ATCC 27774 / DSM 6949 / MB).